Consider the following 558-residue polypeptide: Factor VII-activating protease (558 aa).

The N-terminal stretch at 1 to 23 (MFVRMLVFRVLLLIALVGKSVIG) is a signal peptide. EGF-like domains lie at 71 to 107 (DDDPCQSNPCEHGGDCIIRGDTFSCSCPAPFSGSRCQ), 109 to 146 (AQNKCKDNPCVHGDCLITQKHPYYRCACKYPYTGPDCS), and 148 to 186 (VLPACRPNPCQNGGVCSRHRRRSRFTCACPDQYKGKFCE). 18 disulfide bridges follow: cysteine 75/cysteine 86, cysteine 80/cysteine 95, cysteine 97/cysteine 106, cysteine 113/cysteine 123, cysteine 118/cysteine 134, cysteine 136/cysteine 145, cysteine 152/cysteine 163, cysteine 157/cysteine 174, cysteine 176/cysteine 185, cysteine 192/cysteine 274, cysteine 213/cysteine 255, cysteine 244/cysteine 269, cysteine 299/cysteine 433, cysteine 345/cysteine 361, cysteine 353/cysteine 422, cysteine 445/cysteine 513, cysteine 475/cysteine 491, and cysteine 503/cysteine 531. The Kringle domain occupies 191–274 (DCYVGDGYSY…KWEYCDVTVC (84 aa)). Residues 312–553 (IYGGFKSTAG…FLNWIKTTMH (242 aa)) form the Peptidase S1 domain. Residues histidine 360 and aspartate 409 each act as charge relay system in the active site. Serine 507 functions as the Charge relay system in the catalytic mechanism.

This sequence belongs to the peptidase S1 family. In terms of assembly, heterodimer; disulfide-linked. Heterodimer of a 50 kDa heavy and a 27 kDa light chain linked by a disulfide bond. Post-translationally, proteolytic cleavage at Gly-23 or Met-27 can give rise to the 50 kDa heavy chain (HC) and cleavage at Arg-311 or Lys-317 can give rise to the 27 kDa light chain (LC). The HC can undergo further proteolytic cleavage giving rise to a 26 kDa fragment. The LC can undergo further proteolytic cleavage at Arg-311 leading to a 17-kDa fragment and at Arg-478 leading to a 8-kDa fragment. As to expression, liver and kidney.

It is found in the secreted. In terms of biological role, cleaves the alpha-chain at multiple sites and the beta-chain between 'Lys-53' and 'Lys-54' but not the gamma-chain of fibrinogen and therefore does not initiate the formation of the fibrin clot and does not cause the fibrinolysis directly. It does not cleave (activate) prothrombin and plasminogen but converts the inactive single chain urinary plasminogen activator (pro-urokinase) to the active two chain form. Activates coagulation factor VII. May function as a tumor suppressor negatively regulating cell proliferation and cell migration. The sequence is that of Factor VII-activating protease from Mus musculus (Mouse).